Consider the following 593-residue polypeptide: MALAISHEDTQILLKDKNILQESVLNKYRTAGQIAQTALKYVTSLINDSYHSKTTQRQLTVPELCLLTDSFILTRLEQYYKNKVNERGIAIPTTIDIDQISGGWCPEIDDTQNLLNWNKGKDSTFASSVTGTLRPGDLVKITLGVHIDGYTSEVSHTMVIYPVDETKPILQPTGPLLGGKADAVAAAHIAMETVVALLACALTPEKLPASLGGTSSGITGQLIRTIVDTIARSYNCGVVPGSRVRRIRRFLAGQNEGIVAEREYKGVVWTESHQEADLLSNTDAKDLTVVDRGQSTPFTNVSAIPSDDFVVQSGEVYLIDLKMASLEHCTKKGLVTLETVDSYTGKSHKAGELIARPGAYVRDFAQTHILKLKTSRQLLTKIDKQGVYPFKLSHLSSNFPFVHENEEELQSLKKDLKSFRLGMSEISNNYLCVESPIQIARWVPWDHILKATNPNGNLSYDATSTLTLPGHELPLPKLGVSAIKLKSLMNSTKESISLPVARECNTIVLCDSSVSTTDRPELLRLTGGSKTCQPSWIHSQHELNPQDSIVQGIFQLATLAKDKRFGLLLKETQPMKQKSVETSNGGVEETMKM.

It belongs to the peptidase M24 family. Component of the nucleoplasmic and cytoplasmic pre-60S ribosomal particles. Interacts directly with REI1.

The protein localises to the cytoplasm. The protein resides in the nucleus. Its function is as follows. Probable metalloprotease involved in proper assembly of pre-ribosomal particles during the biogenesis of the 60S ribosomal subunit. Accompanies the pre-60S particles to the cytoplasm. The chain is Probable metalloprotease ARX1 (ARX1) from Saccharomyces cerevisiae (strain ATCC 204508 / S288c) (Baker's yeast).